Consider the following 364-residue polypeptide: Protein PTOV1 homolog (364 aa).

Residues 187–207 (AKRKPGVKTPKQPQPEEPPPV) are disordered.

It belongs to the Mediator complex subunit 25 family. PTOV1 subfamily.

The chain is Protein PTOV1 homolog from Drosophila melanogaster (Fruit fly).